A 147-amino-acid polypeptide reads, in one-letter code: Large ribosomal subunit protein uL13 (147 aa).

The protein belongs to the universal ribosomal protein uL13 family. As to quaternary structure, part of the 50S ribosomal subunit.

Its function is as follows. This protein is one of the early assembly proteins of the 50S ribosomal subunit, although it is not seen to bind rRNA by itself. It is important during the early stages of 50S assembly. This is Large ribosomal subunit protein uL13 from Lactiplantibacillus plantarum (strain ATCC BAA-793 / NCIMB 8826 / WCFS1) (Lactobacillus plantarum).